The primary structure comprises 86 residues: DNA-directed RNA polymerase subunit omega (86 aa).

It belongs to the RNA polymerase subunit omega family. In terms of assembly, the RNAP catalytic core consists of 2 alpha, 1 beta, 1 beta' and 1 omega subunit. When a sigma factor is associated with the core the holoenzyme is formed, which can initiate transcription.

It carries out the reaction RNA(n) + a ribonucleoside 5'-triphosphate = RNA(n+1) + diphosphate. Promotes RNA polymerase assembly. Latches the N- and C-terminal regions of the beta' subunit thereby facilitating its interaction with the beta and alpha subunits. The protein is DNA-directed RNA polymerase subunit omega of Psychrobacter sp. (strain PRwf-1).